A 323-amino-acid chain; its full sequence is tRNA U34 carboxymethyltransferase (323 aa).

Residues K91, W105, K110, G130, D152–T154, I181–E182, M196, Y200, and R315 contribute to the carboxy-S-adenosyl-L-methionine site.

This sequence belongs to the class I-like SAM-binding methyltransferase superfamily. CmoB family. In terms of assembly, homotetramer.

The enzyme catalyses carboxy-S-adenosyl-L-methionine + 5-hydroxyuridine(34) in tRNA = 5-carboxymethoxyuridine(34) in tRNA + S-adenosyl-L-homocysteine + H(+). Catalyzes carboxymethyl transfer from carboxy-S-adenosyl-L-methionine (Cx-SAM) to 5-hydroxyuridine (ho5U) to form 5-carboxymethoxyuridine (cmo5U) at position 34 in tRNAs. In Escherichia fergusonii (strain ATCC 35469 / DSM 13698 / CCUG 18766 / IAM 14443 / JCM 21226 / LMG 7866 / NBRC 102419 / NCTC 12128 / CDC 0568-73), this protein is tRNA U34 carboxymethyltransferase.